Reading from the N-terminus, the 477-residue chain is MTTSSHSSEQPTSTQTSGMWGGRFTEATDAFVAEFTASVQFDQRFYKQDIAGSIAHATMLAKVGVLTEAERDDIIQGLSAIKSEIEAGQFEWRIDLEDVHMNIESRLTQRIGITGKKLHTGRSRNDQVATDIRLYLRDEIDDILTILLRLQKGLLGLAAQNTQTIMPGFTHLQTAQPVTFGHHLMAWFEMFVRDTERLQDCRKRVNRMPLGSAALAGTTYPIDRAFTAELLGFEAVSENSLDAVSDRDFAIEFNAAASLIMMHLSRMSEELILWTSAQFKFVNIPDRFCTGSSIMPQKKNPDVPELIRGKSGRVFGDLISLLTLMKGQPLAYNKDNQEDKEPLFDAIDTVRGSLMAFADMVPALGPNIEIMREAALRGFSTATDLADYLVKKGVAFRDAHEIVGKAVALGVQEEKDLSELSLEQLQQFSDLITADVFDKALTLEASVNARDHIGGTSPKQVEAAIARAYDRLEKLYA.

A compositionally biased stretch (polar residues) spans M1–G18. The disordered stretch occupies residues M1–G21.

This sequence belongs to the lyase 1 family. Argininosuccinate lyase subfamily.

The protein resides in the cytoplasm. The catalysed reaction is 2-(N(omega)-L-arginino)succinate = fumarate + L-arginine. It functions in the pathway amino-acid biosynthesis; L-arginine biosynthesis; L-arginine from L-ornithine and carbamoyl phosphate: step 3/3. The sequence is that of Argininosuccinate lyase from Acinetobacter baylyi (strain ATCC 33305 / BD413 / ADP1).